A 367-amino-acid chain; its full sequence is Cystinosin (367 aa).

Positions 1–22 (MRRNWLLILTLFLLMFIEKYES) are cleaved as a signal peptide. At 23 to 125 (TVSLTAPPTV…LVIHSRIVSI (103 aa)) the chain is on the lumenal side. N-linked (GlcNAc...) asparagine glycans are attached at residues Asn36, Asn51, Asn66, Asn84, Asn104, and Asn107. Positions 123–189 (VSIINQVIGW…LLWVPYIQEE (67 aa)) constitute a PQ-loop 1 domain. A helical transmembrane segment spans residues 126–150 (INQVIGWIYFMAWSVSFYPQVIQNW). At 151–159 (RRKSVIGLS) the chain is on the cytoplasmic side. Residues 160–179 (FDFLALNLTGFVAYSVFNIG) form a helical membrane-spanning segment. Residue Asn166 participates in L-cystine binding. The Lumenal segment spans residues 180 to 202 (LLWVPYIQEEFLLKYPNGVNPVD). Residues 203 to 225 (SNDAFFSLHAVALTLIVILQCCL) traverse the membrane as a helical segment. Asp205 is a H(+) binding site. Residues 226–234 (YERGNQRVS) are Cytoplasmic-facing. A helical membrane pass occupies residues 235–257 (WPSIGFLVLAWLFVLVTMIVAAV). Topologically, residues 258 to 263 (GITTWL) are lumenal. Residues 263–328 (LQFLFCFSYI…QSYNNDQWTL (66 aa)) form the PQ-loop 2 domain. The chain crosses the membrane as a helical span at residues 264–289 (QFLFCFSYIKLIITLIKYFPQAYMNF). Lys273, Lys280, and Tyr281 together coordinate L-cystine. At 290 to 298 (YYKSTKGWS) the chain is on the cytoplasmic side. Residues 299–308 (IGGVLLDFTG) traverse the membrane as a helical segment. Asp305 lines the L-cystine pocket. Asp305 is a binding site for H(+). Over 309–331 (GSFSLLQMFLQSYNNDQWTLIFG) the chain is Lumenal. Residues 332–354 (DPTKFGLGVFTIFFDVVFFIQHF) traverse the membrane as a helical segment. Residue Asp346 coordinates H(+). Over 355-367 (YLYRKKPGYDQLN) the chain is Cytoplasmic. Residues 362–366 (GYDQL) carry the Lysosomal targeting motif motif.

The protein belongs to the cystinosin family. As to quaternary structure, interacts with components of the V-ATPase complex. Interacts with components of the Ragulator complex. Interacts with RRAGA/RagA and RRAGC/RagC. Interacts with AP-3 complex subunit mu (AP3M1 or AP3M2).

The protein resides in the lysosome membrane. Its subcellular location is the melanosome membrane. The enzyme catalyses L-cystine(out) + H(+)(out) = L-cystine(in) + H(+)(in). Switches between a lumen- and a cytosol-open conformation: pH induces conformational changes and shifts the equilibrium to facilitate the transition between the lumen- and cytosol-open conformation, thereby promoting cystine transport. Protonation of specific aspartate residues (Asp-205, Asp-305 and Asp-346) favors the cytosol-open conformation. Functionally, cystine/H(+) symporter that mediates export of cystine, the oxidized dimer of cysteine, from lysosomes. Plays an important role in melanin synthesis by catalyzing cystine export from melanosomes, possibly by inhibiting pheomelanin synthesis. In addition to cystine export, also acts as a positive regulator of mTORC1 signaling in kidney proximal tubular cells, via interactions with components of the v-ATPase and Ragulator complexes. Also involved in small GTPase-regulated vesicle trafficking and lysosomal localization of LAMP2A, independently of cystine transporter activity. The sequence is that of Cystinosin from Mus musculus (Mouse).